A 922-amino-acid polypeptide reads, in one-letter code: MVQLRKLLRVLTLMKFPCCVLEVLLCALAAAARGQEMYAPHSIRIEGDVTLGGLFPVHAKGPSGVPCGDIKRENGIHRLEAMLYALDQINSDPNLLPNVTLGARILDTCSRDTYALEQSLTFVQALIQKDTSDVRCTNGEPPVFVKPEKVVGVIGASGSSVSIMVANILRLFQIPQISYASTAPGLSDDRRYDFFSRVVPPDSFQAQAMVDIVKALGWNYVSTLASEGSYGEKGVESFTRISKEAGGLCIAQSVRIPQERKDRTIDFDRIIKQLLDTPNSRAVVIFANDEDIKQILAAAKRADQVGHFLWVGSDSWGSKINPLHQHEDIAEGAITIQPKRATVEGFDAYFTSRTLENNRRNVWFAEYWEENFNCKLTIGGSKKEDTDRKCTGQERIGKDSNYEQEGKVQFVIDAVYAMAHALHHMNKDLCADYRGVCPEMEQAGGKKLLKYIRNVNFNGSAGTPVMFNKNGDAPGRYDIFQYQTTNTSNPGYRLIGQWTDELQLNIEDMQWGKGVREIPPSVCTLPCKPGQRKKTQKGTPCCWTCEPCDGYQYQFDEMTCQHCPYDQRPNENRTGCQDIPIIKLEWHSPWAVIPVFLAMLGIIATIFVMATFIRYNDTPIVRASGRELSYVLLTGIFLCYIITFLMIAKPDVAVCSFRRVFLGLGMCISYAALLTKTNRIYRIFEQGKKSVTAPRLISPTSQLAITSSLISVQLLGVFIWFGVDPPNIIIDYDEHKTMNPEQARGVLKCDITDLQIICSLGYSILLMVTCTVYAIKTRGVPENFNEAKPIGFTMYTTCIVWLAFIPIFFGTAQSAEKLYIQTTTLTISMNLSASVALGMLYMPKVYIIIFHPELNVQKRKRSFKAVVTAATMSSRLSHKPSDRPNGEAKTELCENVDPNNCIPPVRKSVQKSVTWYTIPPTV.

The first 34 residues, 1–34 (MVQLRKLLRVLTLMKFPCCVLEVLLCALAAAARG), serve as a signal peptide directing secretion. Residues 35–590 (QEMYAPHSIR…IIKLEWHSPW (556 aa)) are Extracellular-facing. C67 and C109 are oxidised to a cystine. N-linked (GlcNAc...) asparagine glycosylation occurs at N98. L-glutamate is bound by residues S159, 180-182 (AST), Y230, and D314. Intrachain disulfides connect C249–C541, C374–C390, C430–C437, C523–C542, C527–C545, C548–C560, and C563–C576. K407 is an L-glutamate binding site. 2 N-linked (GlcNAc...) asparagine glycosylation sites follow: N458 and N486. N572 carries N-linked (GlcNAc...) asparagine glycosylation. A helical membrane pass occupies residues 591–615 (AVIPVFLAMLGIIATIFVMATFIRY). Residues 616–627 (NDTPIVRASGRE) lie on the Cytoplasmic side of the membrane. Residues 628-648 (LSYVLLTGIFLCYIITFLMIA) traverse the membrane as a helical segment. Residues 649-654 (KPDVAV) lie on the Extracellular side of the membrane. Residues 655 to 675 (CSFRRVFLGLGMCISYAALLT) form a helical membrane-spanning segment. The Cytoplasmic portion of the chain corresponds to 676 to 702 (KTNRIYRIFEQGKKSVTAPRLISPTSQ). The helical transmembrane segment at 703 to 723 (LAITSSLISVQLLGVFIWFGV) threads the bilayer. The Extracellular portion of the chain corresponds to 724-753 (DPPNIIIDYDEHKTMNPEQARGVLKCDITD). Residues 754-775 (LQIICSLGYSILLMVTCTVYAI) form a helical membrane-spanning segment. Over 776–788 (KTRGVPENFNEAK) the chain is Cytoplasmic. Residues 789-810 (PIGFTMYTTCIVWLAFIPIFFG) traverse the membrane as a helical segment. At 811–825 (TAQSAEKLYIQTTTL) the chain is on the extracellular side. Residues 826 to 850 (TISMNLSASVALGMLYMPKVYIIIF) form a helical membrane-spanning segment. The Cytoplasmic segment spans residues 851-922 (HPELNVQKRK…VTWYTIPPTV (72 aa)).

This sequence belongs to the G-protein coupled receptor 3 family. In terms of assembly, homodimer. Interacts with PICK1.

It is found in the cell membrane. Functionally, G-protein coupled receptor activated by glutamate that regulates axon outgrowth through the MAPK-cAMP-PKA signaling pathway during neuronal development. Ligand binding causes a conformation change that triggers signaling via guanine nucleotide-binding proteins (G proteins) and modulates the activity of downstream effectors, such as adenylate cyclase that it inhibits. The polypeptide is Metabotropic glutamate receptor 7 (GRM7) (Pongo abelii (Sumatran orangutan)).